We begin with the raw amino-acid sequence, 512 residues long: Cobyric acid synthase (512 aa).

A GATase cobBQ-type domain is found at 251-451 (ALDITVIRLP…IHGLFDSANF (201 aa)). The active-site Nucleophile is the C332. The active site involves H443.

The protein belongs to the CobB/CobQ family. CobQ subfamily.

It participates in cofactor biosynthesis; adenosylcobalamin biosynthesis. In terms of biological role, catalyzes amidations at positions B, D, E, and G on adenosylcobyrinic A,C-diamide. NH(2) groups are provided by glutamine, and one molecule of ATP is hydrogenolyzed for each amidation. The sequence is that of Cobyric acid synthase from Photorhabdus laumondii subsp. laumondii (strain DSM 15139 / CIP 105565 / TT01) (Photorhabdus luminescens subsp. laumondii).